The sequence spans 104 residues: MMSCFAGTRGSARVWLCAIALCLLASSCARGAAAFPNKPDSPGEDAPAEDLARYLSAVRHYINLITRQRYGKRTLTEPYVPEFIFQENRGDRSSNPRFDSVTMW.

An N-terminal signal peptide occupies residues 1 to 34; sequence MMSCFAGTRGSARVWLCAIALCLLASSCARGAAA. At Tyr70 the chain carries Tyrosine amide. A propeptide spans 74-104 (C-terminal extension); sequence TLTEPYVPEFIFQENRGDRSSNPRFDSVTMW.

Belongs to the NPY family. In terms of tissue distribution, lateral brainstem, dorsal spinal cord and retina.

It is found in the secreted. NPY is implicated in the control of feeding and in secretion of gonadotrophin-release hormone. This chain is Neuropeptide Y (npy), found in Lampetra fluviatilis (European river lamprey).